Here is a 327-residue protein sequence, read N- to C-terminus: Probable 6-phosphogluconolactonase 3, chloroplastic (327 aa).

Low complexity-rich tracts occupy residues 1 to 29 (MSAS…PASR) and 43 to 66 (VASR…PGGA). The segment at 1–66 (MSASAAVSST…VYATASPGGA (66 aa)) is disordered. The transit peptide at 1–71 (MSASAAVSST…SPGGAGGTTA (71 aa)) directs the protein to the chloroplast.

This sequence belongs to the glucosamine/galactosamine-6-phosphate isomerase family. 6-phosphogluconolactonase subfamily.

It localises to the plastid. Its subcellular location is the chloroplast. It catalyses the reaction 6-phospho-D-glucono-1,5-lactone + H2O = 6-phospho-D-gluconate + H(+). It functions in the pathway carbohydrate degradation; pentose phosphate pathway; D-ribulose 5-phosphate from D-glucose 6-phosphate (oxidative stage): step 2/3. In terms of biological role, hydrolysis of 6-phosphogluconolactone to 6-phosphogluconate. This Oryza sativa subsp. indica (Rice) protein is Probable 6-phosphogluconolactonase 3, chloroplastic.